The sequence spans 374 residues: Peptide chain release factor 2 (374 aa).

At glutamine 248 the chain carries N5-methylglutamine.

It belongs to the prokaryotic/mitochondrial release factor family. In terms of processing, methylated by PrmC. Methylation increases the termination efficiency of RF2.

It localises to the cytoplasm. In terms of biological role, peptide chain release factor 2 directs the termination of translation in response to the peptide chain termination codons UGA and UAA. This Thermomicrobium roseum (strain ATCC 27502 / DSM 5159 / P-2) protein is Peptide chain release factor 2.